The sequence spans 954 residues: Leucine--tRNA ligase (954 aa).

The 'HIGH' region motif lies at 67 to 78 (PYPSGAGLHVGH). The short motif at 729–733 (KMGKS) is the 'KMSKS' region element. An ATP-binding site is contributed by Lys-732.

The protein belongs to the class-I aminoacyl-tRNA synthetase family.

Its subcellular location is the cytoplasm. It catalyses the reaction tRNA(Leu) + L-leucine + ATP = L-leucyl-tRNA(Leu) + AMP + diphosphate. The polypeptide is Leucine--tRNA ligase (Salinispora tropica (strain ATCC BAA-916 / DSM 44818 / JCM 13857 / NBRC 105044 / CNB-440)).